The chain runs to 662 residues: Glycogen debranching enzyme (662 aa).

The active-site Nucleophile is Asp-338. Glu-373 functions as the Proton donor in the catalytic mechanism.

Belongs to the glycosyl hydrolase 13 family.

It catalyses the reaction Hydrolysis of (1-&gt;6)-alpha-D-glucosidic linkages to branches with degrees of polymerization of three or four glucose residues in limit dextrin.. Its pathway is glycan degradation; glycogen degradation. Functionally, removes maltotriose and maltotetraose chains that are attached by 1,6-alpha-linkage to the limit dextrin main chain, generating a debranched limit dextrin. The sequence is that of Glycogen debranching enzyme from Yersinia pseudotuberculosis serotype O:1b (strain IP 31758).